Consider the following 51-residue polypeptide: Large ribosomal subunit protein bL33 (51 aa).

It belongs to the bacterial ribosomal protein bL33 family. As to quaternary structure, part of the 50S ribosomal subunit. Cross-links to the P and E site tRNAs.

The sequence is that of Large ribosomal subunit protein bL33 from Pseudomonas aeruginosa (strain ATCC 15692 / DSM 22644 / CIP 104116 / JCM 14847 / LMG 12228 / 1C / PRS 101 / PAO1).